A 535-amino-acid chain; its full sequence is Inositol 1,4,5-trisphosphate receptor-interacting protein-like 2 (535 aa).

An N-terminal signal peptide occupies residues M1–A38. The Extracellular segment spans residues E39 to G43. The helical transmembrane segment at V44 to L64 threads the bilayer. The Cytoplasmic segment spans residues R65–P535. A Phosphoserine modification is found at S139.

This sequence belongs to the ITPRIP family.

The protein localises to the membrane. In Homo sapiens (Human), this protein is Inositol 1,4,5-trisphosphate receptor-interacting protein-like 2 (ITPRIPL2).